A 138-amino-acid polypeptide reads, in one-letter code: Acidic phospholipase A2 homolog sistruxin A (138 aa).

An N-terminal signal peptide occupies residues 1-37; that stretch reads MRALWIVAVLLLGVEGSLVEFETLIMKIAGRSGVWYY. Cystine bridges form between Cys42–Cys131, Cys44–Cys60, Cys59–Cys111, Cys65–Cys138, Cys66–Cys104, Cys73–Cys97, and Cys91–Cys102. Positions 78-83 are excised as a propeptide; the sequence is DVYTYR. Gln84 carries the post-translational modification Pyrrolidone carboxylic acid. Positions 119 to 124 are excised as a propeptide; it reads YNHKYW.

Belongs to the phospholipase A2 family. Group II subfamily. D49 sub-subfamily. Heterodimer of an acidic subunit and a basic chain. The acidic subunit is non-toxic, without enzymatic activity and comprises 3 peptides that are cross-linked by 7 disulfide bridges. The basic subunit is toxic, has phospholipase A2 activity and is composed of a single chain. In terms of tissue distribution, expressed by the venom gland.

It localises to the secreted. In terms of biological role, snake venom phospholipase A2 (PLA2) that inhibits neuromuscular transmission by blocking acetylcholine release from the nerve termini. The chain is Acidic phospholipase A2 homolog sistruxin A from Sistrurus tergeminus (Western massasauga).